The sequence spans 217 residues: tRNA (guanine-N(7)-)-methyltransferase (217 aa).

4 residues coordinate S-adenosyl-L-methionine: glutamate 44, glutamate 69, aspartate 96, and aspartate 118. Aspartate 118 is an active-site residue. Residues lysine 122, aspartate 154, and threonine 191 to glutamate 194 contribute to the substrate site.

The protein belongs to the class I-like SAM-binding methyltransferase superfamily. TrmB family.

It carries out the reaction guanosine(46) in tRNA + S-adenosyl-L-methionine = N(7)-methylguanosine(46) in tRNA + S-adenosyl-L-homocysteine. It participates in tRNA modification; N(7)-methylguanine-tRNA biosynthesis. Catalyzes the formation of N(7)-methylguanine at position 46 (m7G46) in tRNA. This is tRNA (guanine-N(7)-)-methyltransferase from Bacillus thuringiensis (strain Al Hakam).